The sequence spans 677 residues: Methionine--tRNA ligase (677 aa).

The 'HIGH' region signature appears at 15-25 (PYANGSIHLGH). The Zn(2+) site is built by Cys146, Cys149, Cys159, and Cys162. The short motif at 333 to 337 (KMSKS) is the 'KMSKS' region element. An ATP-binding site is contributed by Lys336. Residues 575-677 (DFAKIDLRVA…DGAKPGQQVK (103 aa)) form the tRNA-binding domain.

It belongs to the class-I aminoacyl-tRNA synthetase family. MetG type 1 subfamily. Homodimer. Zn(2+) is required as a cofactor.

It is found in the cytoplasm. The enzyme catalyses tRNA(Met) + L-methionine + ATP = L-methionyl-tRNA(Met) + AMP + diphosphate. Its function is as follows. Is required not only for elongation of protein synthesis but also for the initiation of all mRNA translation through initiator tRNA(fMet) aminoacylation. This is Methionine--tRNA ligase from Salmonella paratyphi C (strain RKS4594).